A 161-amino-acid chain; its full sequence is Large ribosomal subunit protein bL21m (161 aa).

Residues 1-35 constitute a mitochondrion transit peptide; it reads MLQLKFIWPVARITPIYRPFTSHPFRNLATSSSIS.

This sequence belongs to the bacterial ribosomal protein bL21 family. In terms of assembly, component of the mitochondrial large ribosomal subunit (mt-LSU). Mature yeast 74S mitochondrial ribosomes consist of a small (37S) and a large (54S) subunit. The 37S small subunit contains a 15S ribosomal RNA (15S mt-rRNA) and 34 different proteins. The 54S large subunit contains a 21S rRNA (21S mt-rRNA) and 46 different proteins.

Its subcellular location is the mitochondrion. Its function is as follows. Component of the mitochondrial ribosome (mitoribosome), a dedicated translation machinery responsible for the synthesis of mitochondrial genome-encoded proteins, including at least some of the essential transmembrane subunits of the mitochondrial respiratory chain. The mitoribosomes are attached to the mitochondrial inner membrane and translation products are cotranslationally integrated into the membrane. This chain is Large ribosomal subunit protein bL21m (MRPL49), found in Saccharomyces cerevisiae (strain ATCC 204508 / S288c) (Baker's yeast).